The following is a 194-amino-acid chain: MRKWILTWILPSLLYRSCFHIICLVGTISLACNDMTPEQMATNVNCSSPERHTRSYDYMEGGDIRVRRLFCRTQWYLRIDKRGKVKGTQEMKNNYNIMEIRTVAVGIVAIKGVESEYYLAMNKEGKLYAKKECNEDCNFKELILENHYNTYASAKWTHSGGEMFVALNQKGVPVRGKKTKKEQKTAHFLPMAIT.

Positions 1–31 (MRKWILTWILPSLLYRSCFHIICLVGTISLA) are cleaved as a signal peptide. Asn45 carries N-linked (GlcNAc...) asparagine glycosylation.

Belongs to the heparin-binding growth factors family. In terms of assembly, interacts with FGFBP1. Interacts with FGFR2. Affinity between fibroblast growth factors (FGFs) and their receptors is increased by heparan sulfate glycosaminoglycans that function as coreceptors.

Its subcellular location is the secreted. Its function is as follows. Plays an important role in the regulation of embryonic development, cell proliferation and cell differentiation. Required for normal branching morphogenesis. Growth factor active on keratinocytes. Possible major paracrine effector of normal epithelial cell proliferation. The polypeptide is Fibroblast growth factor 7 (FGF7) (Cervus elaphus (Red deer)).